A 182-amino-acid chain; its full sequence is UPF0316 protein BCB4264_A3368 (182 aa).

3 consecutive transmembrane segments (helical) span residues Leu-6–Val-26, Ser-32–Phe-52, and Trp-58–Ile-78.

Belongs to the UPF0316 family.

Its subcellular location is the cell membrane. The polypeptide is UPF0316 protein BCB4264_A3368 (Bacillus cereus (strain B4264)).